Here is an 89-residue protein sequence, read N- to C-terminus: Sodium channel toxin To13 (89 aa).

The first 18 residues, 1–18 (MKTLFLIITSFILLEVEG), serve as a signal peptide directing secretion. Residues 20-87 (KNGYPRDSKG…TWKNKEPKCK (68 aa)) enclose the LCN-type CS-alpha/beta domain. Cystine bridges form between Cys30–Cys86, Cys34–Cys60, Cys45–Cys67, and Cys49–Cys69.

It belongs to the long (4 C-C) scorpion toxin superfamily. Sodium channel inhibitor family. Expressed by the venom gland.

It is found in the secreted. Its function is as follows. Inhibits voltage-gated sodium channels (Nav). In Tityus obscurus (Amazonian scorpion), this protein is Sodium channel toxin To13.